The primary structure comprises 340 residues: Tetraacyldisaccharide 4'-kinase (340 aa).

51 to 58 (HMGGAGKT) lines the ATP pocket.

It belongs to the LpxK family.

It catalyses the reaction a lipid A disaccharide + ATP = a lipid IVA + ADP + H(+). Its pathway is glycolipid biosynthesis; lipid IV(A) biosynthesis; lipid IV(A) from (3R)-3-hydroxytetradecanoyl-[acyl-carrier-protein] and UDP-N-acetyl-alpha-D-glucosamine: step 6/6. Its function is as follows. Transfers the gamma-phosphate of ATP to the 4'-position of a tetraacyldisaccharide 1-phosphate intermediate (termed DS-1-P) to form tetraacyldisaccharide 1,4'-bis-phosphate (lipid IVA). This is Tetraacyldisaccharide 4'-kinase from Rhodopseudomonas palustris (strain ATCC BAA-98 / CGA009).